The chain runs to 396 residues: S-adenosylmethionine synthase (396 aa).

An ATP-binding site is contributed by His-16. Asp-18 is a binding site for Mg(2+). K(+) is bound at residue Glu-44. Positions 57 and 100 each coordinate L-methionine. The flexible loop stretch occupies residues 100-110 (QSVDIAQGVDR). ATP-binding positions include 165-167 (DAK), Asp-240, 246-247 (RK), Ala-263, and Lys-267. Residue Asp-240 coordinates L-methionine. Lys-271 serves as a coordination point for L-methionine.

It belongs to the AdoMet synthase family. In terms of assembly, homotetramer; dimer of dimers. Mg(2+) is required as a cofactor. Requires K(+) as cofactor.

The protein localises to the cytoplasm. It catalyses the reaction L-methionine + ATP + H2O = S-adenosyl-L-methionine + phosphate + diphosphate. It functions in the pathway amino-acid biosynthesis; S-adenosyl-L-methionine biosynthesis; S-adenosyl-L-methionine from L-methionine: step 1/1. Functionally, catalyzes the formation of S-adenosylmethionine (AdoMet) from methionine and ATP. The overall synthetic reaction is composed of two sequential steps, AdoMet formation and the subsequent tripolyphosphate hydrolysis which occurs prior to release of AdoMet from the enzyme. The sequence is that of S-adenosylmethionine synthase from Pseudomonas putida (strain ATCC 700007 / DSM 6899 / JCM 31910 / BCRC 17059 / LMG 24140 / F1).